We begin with the raw amino-acid sequence, 301 residues long: Probable alpha-L-glutamate ligase (301 aa).

The ATP-grasp domain occupies 104-287; that stretch reads LQLLSRKGIG…IAGMIIEYIE (184 aa). ATP is bound by residues lysine 141, 178-179, aspartate 187, and 211-213; these read EY and RSN. Aspartate 248, glutamate 260, and asparagine 262 together coordinate Mg(2+). Aspartate 248, glutamate 260, and asparagine 262 together coordinate Mn(2+).

The protein belongs to the RimK family. Mg(2+) serves as cofactor. It depends on Mn(2+) as a cofactor.

The protein is Probable alpha-L-glutamate ligase of Methanococcoides burtonii (strain DSM 6242 / NBRC 107633 / OCM 468 / ACE-M).